The chain runs to 474 residues: Pyoverdine export outer membrane protein OpmQ (474 aa).

A signal peptide spans 1-17; it reads MSMKNLSLISACLLLGA. The N-palmitoyl cysteine moiety is linked to residue C18. C18 carries S-diacylglycerol cysteine lipidation.

The protein belongs to the outer membrane factor (OMF) (TC 1.B.17) family. As to quaternary structure, part of the tripartite efflux system PvdRT-OpmQ, which is composed of an inner membrane component with both ATPase and permease domains, PvdT, a periplasmic membrane fusion protein, PvdR, and an outer membrane component, OpmQ.

It is found in the cell outer membrane. Its function is as follows. Part of the tripartite efflux system PvdRT-OpmQ required for the secretion into the extracellular milieu of the siderophore pyoverdine (PVD), which is involved in iron acquisition. The system is responsible for export of newly synthesized PVD after the final steps of biosynthesis have taken place in the periplasm. It is also responsible for recycling of PVD after internalization of ferri-PVD into the periplasm by the outer-membrane receptor FpvA and release of iron from PVD, thus making PVD available for new cycles of iron uptake. In addition, can expel unwanted metals complexed with PVD from the periplasm into the extracellular medium. The protein is Pyoverdine export outer membrane protein OpmQ of Pseudomonas aeruginosa (strain ATCC 15692 / DSM 22644 / CIP 104116 / JCM 14847 / LMG 12228 / 1C / PRS 101 / PAO1).